The primary structure comprises 181 residues: ATP synthase subunit delta (181 aa).

It belongs to the ATPase delta chain family. F-type ATPases have 2 components, F(1) - the catalytic core - and F(0) - the membrane proton channel. F(1) has five subunits: alpha(3), beta(3), gamma(1), delta(1), epsilon(1). F(0) has three main subunits: a(1), b(2) and c(10-14). The alpha and beta chains form an alternating ring which encloses part of the gamma chain. F(1) is attached to F(0) by a central stalk formed by the gamma and epsilon chains, while a peripheral stalk is formed by the delta and b chains.

Its subcellular location is the cell membrane. F(1)F(0) ATP synthase produces ATP from ADP in the presence of a proton or sodium gradient. F-type ATPases consist of two structural domains, F(1) containing the extramembraneous catalytic core and F(0) containing the membrane proton channel, linked together by a central stalk and a peripheral stalk. During catalysis, ATP synthesis in the catalytic domain of F(1) is coupled via a rotary mechanism of the central stalk subunits to proton translocation. In terms of biological role, this protein is part of the stalk that links CF(0) to CF(1). It either transmits conformational changes from CF(0) to CF(1) or is implicated in proton conduction. The sequence is that of ATP synthase subunit delta from Lacticaseibacillus paracasei (strain ATCC 334 / BCRC 17002 / CCUG 31169 / CIP 107868 / KCTC 3260 / NRRL B-441) (Lactobacillus paracasei).